A 348-amino-acid chain; its full sequence is Fe(3+) ions import ATP-binding protein FbpC (348 aa).

The ABC transporter domain maps to 7–237 (VELRNVTKRF…PASRFMASFM (231 aa)). 39-46 (GPSGCGKT) provides a ligand contact to ATP.

The protein belongs to the ABC transporter superfamily. Fe(3+) ion importer (TC 3.A.1.10) family. The complex is composed of two ATP-binding proteins (FbpC), two transmembrane proteins (FbpB) and a solute-binding protein (FbpA).

It is found in the cell inner membrane. It carries out the reaction Fe(3+)(out) + ATP + H2O = Fe(3+)(in) + ADP + phosphate + H(+). Part of the ABC transporter complex FbpABC involved in Fe(3+) ions import. Responsible for energy coupling to the transport system. The sequence is that of Fe(3+) ions import ATP-binding protein FbpC from Escherichia coli O157:H7.